The primary structure comprises 618 residues: Sodium/iodide cotransporter (618 aa).

The Extracellular portion of the chain corresponds to 1-14; that stretch reads MEGAEAGARATFGP. A helical transmembrane segment spans residues 15–31; the sequence is WDYGVFATMLLVSTGIG. Residues 32-56 lie on the Cytoplasmic side of the membrane; the sequence is LWVGLARGGQRSADDFFTGGRQLAA. Residues 57–80 traverse the membrane as a discontinuously helical segment; sequence VPVGLSLAASFMSAVQVLGVPAEA. 3 residues coordinate Na(+): serine 69, valine 71, and glutamine 72. Valine 76 lines the iodide pocket. Residues 81 to 84 lie on the Extracellular side of the membrane; sequence ARYG. A helical membrane pass occupies residues 85–105; that stretch reads LKFLWMCVGQLLNSLLTALLF. Methionine 90 contacts iodide. Residues 106–130 are Cytoplasmic-facing; the sequence is LPIFYRLGLTSTYQYLELRFSRAVR. A helical membrane pass occupies residues 131–157; that stretch reads LCGTLQYLVATMLYTGIVIYAPALILN. Position 144 (tyrosine 144) interacts with Na(+). Residues 158–163 are Extracellular-facing; sequence QVTGLD. Residues 164–181 traverse the membrane as a helical segment; that stretch reads IWASLLSTGIICTLYTTV. At 182 to 189 the chain is on the cytoplasmic side; the sequence is GGMKAVVW. The chain crosses the membrane as a helical span at residues 190–208; that stretch reads TDVFQVVVMLVGFWVILAR. Over 209 to 243 the chain is Extracellular; sequence GVMLMGGPWNVLSLAQNHSRINLMDFDPDPRSRYT. Residues 244–266 traverse the membrane as a discontinuously helical segment; the sequence is FWTFVVGGSLVWLSMYGVNQAQV. Tryptophan 255 is a binding site for iodide. Methionine 258 provides a ligand contact to Na(+). The Cytoplasmic segment spans residues 267 to 278; that stretch reads QRYVACHTERKA. The helical transmembrane segment at 279–301 threads the bilayer; that stretch reads KLALLVNQLGLFLIVASAACCGI. At 302–335 the chain is on the extracellular side; it reads VMFVYYKDCDPLLTGRIAAPDQYMPLLVLDIFED. The helical transmembrane segment at 336–363 threads the bilayer; that stretch reads LPGVPGLFLACAYSGTLSTASTSINAMA. The Cytoplasmic portion of the chain corresponds to 364–386; it reads AVTVEDLIKPRMPSLAPRKLVFI. The helical transmembrane segment at 387-408 threads the bilayer; sequence SKGLSFIYGSTCLTVAALSSLL. Residues 409–411 lie on the Extracellular side of the membrane; the sequence is GGG. Residues 412–437 traverse the membrane as a helical segment; that stretch reads VLQGSFTVMGVISGPLLGAFTLGMLL. Residue leucine 413 coordinates iodide. Residues serine 416 and phenylalanine 417 each contribute to the Na(+) site. Phenylalanine 417 serves as a coordination point for iodide. Over 438–441 the chain is Cytoplasmic; it reads PACN. The helical transmembrane segment at 442-465 threads the bilayer; that stretch reads TPGVLSGLTAGLAVSLWVAVGATL. Over 466-520 the chain is Extracellular; the sequence is YPPGEQTMGVLPTSAAGCTNASVLPSPPGAANTSRGIPSSGMDSGRPAFADTFYA. 2 N-linked (GlcNAc...) asparagine glycosylation sites follow: asparagine 485 and asparagine 497. A helical transmembrane segment spans residues 521–545; it reads VSYLYYGALGTLTTMLCGALISYLT. Residues 546 to 618 are Cytoplasmic-facing; the sequence is GPTKRSSLGP…YLGHDVETNL (73 aa). The residue at position 551 (serine 551) is a Phosphoserine; by PKA. Basic and acidic residues predominate over residues 571–587; the sequence is PKEDTTTLEDSLVKGPE. The tract at residues 571-618 is disordered; sequence PKEDTTTLEDSLVKGPEDIPAATKKPPGFRPEAETHPLYLGHDVETNL.

The protein belongs to the sodium:solute symporter (SSF) (TC 2.A.21) family. Monomer. In terms of processing, glycosylated.

It localises to the cell membrane. It is found in the cytoplasm. It catalyses the reaction iodide(out) + 2 Na(+)(out) = iodide(in) + 2 Na(+)(in). It carries out the reaction chlorate(out) + 2 Na(+)(out) = chlorate(in) + 2 Na(+)(in). The enzyme catalyses thiocyanate(out) + 2 Na(+)(out) = thiocyanate(in) + 2 Na(+)(in). The catalysed reaction is nitrate(out) + 2 Na(+)(out) = nitrate(in) + 2 Na(+)(in). It catalyses the reaction selenocyanate(out) + 2 Na(+)(out) = selenocyanate(in) + 2 Na(+)(in). With respect to regulation, perchlorate inhibits iodide transport activity. Oxyanions inhibit iodide transport activity by blocking the binding sites for iodide and one of the sodium ions. Sodium:iodide symporter that mediates the transport of iodide into the thyroid gland. Can also mediate the transport of chlorate, thiocynate, nitrate and selenocynate. This Mus musculus (Mouse) protein is Sodium/iodide cotransporter (Slc5a5).